The primary structure comprises 460 residues: Angiopoietin-related protein 3 (460 aa).

The first 16 residues, 1–16, serve as a signal peptide directing secretion; it reads MFTIKLLLFIVPLVIS. The tract at residues 17–165 is sufficient to inhibit LPL lipase activity; the sequence is SRIDQDNSSF…PEHPEVTSLK (149 aa). Residues 17–207 form a sufficient to inhibit LIPG/EL phospholipase activity region; that stretch reads SRIDQDNSSF…EIENQLRRTS (191 aa). The tract at residues 32 to 56 is required for inhibition of LPL lipase activity; it reads EPKSRFAMLDDVKILANGLLQLGHG. Positions 85–210 form a coiled coil; the sequence is LSLQTSEIKE…NQLRRTSIQE (126 aa). Asn-115 is a glycosylation site (N-linked (GlcNAc...) asparagine). Residue Thr-226 is glycosylated (O-linked (GalNAc) threonine). A Fibrinogen C-terminal domain is found at 237–455; it reads VKHDGIPAEC…STKMLIHPTD (219 aa). An intrachain disulfide couples Cys-246 to Cys-274. Asn-296 and Asn-357 each carry an N-linked (GlcNAc...) asparagine glycan. Cys-394 and Cys-408 are joined by a disulfide.

In terms of assembly, interacts with ANGPTL8. Interacts with ITGB3. Post-translationally, O-glycosylated at Thr-226 by GALNT2; blocks processing and activation by proprotein convertases. In terms of processing, in part proteolytically cleaved by proprotein convertases; proposed to be involved in activation. Expressed principally in liver. Weakly expressed in kidney. Binds to adipocytes. Increased expression and colocalization with activated ITGB3 in glomeruli of patients with nephrotic syndrome showing effaced podocyte foot processes (at protein level).

Its subcellular location is the secreted. It is found in the cell projection. The protein localises to the lamellipodium. Its function is as follows. Acts in part as a hepatokine that is involved in regulation of lipid and glucose metabolism. Proposed to play a role in the trafficking of energy substrates to either storage or oxidative tissues in response to food intake. Has a stimulatory effect on plasma triglycerides (TG), which is achieved by suppressing plasma TG clearance via inhibition of LPL activity. The inhibition of LPL activity appears to be an indirect mechanism involving recruitment of proprotein convertases PCSK6 and FURIN to LPL leading to cleavage and dissociation of LPL from the cell surface; the function does not require ANGPTL3 proteolytic cleavage but seems to be mediated by the N-terminal domain, and is not inhibited by GPIHBP1. Can inhibit endothelial lipase, causing increased plasma levels of high density lipoprotein (HDL) cholesterol and phospholipids. Can bind to adipocytes to activate lipolysis, releasing free fatty acids and glycerol. Suppresses LPL specifically in oxidative tissues which is required to route very low density lipoprotein (VLDL)-TG to white adipose tissue (WAT) for storage in response to food; the function may involve cooperation with circulating, liver-derived ANGPTL8 and ANGPTL4 expression in WAT. Contributes to lower plasma levels of low density lipoprotein (LDL)-cholesterol by a mechanism that is independent of the canonical pathway implicating APOE and LDLR. May stimulate hypothalamic LPL activity. Functionally, in vitro inhibits LPL activity; not effective on GPIHBP1-stabilized LPL. In terms of biological role, involved in angiogenesis. Binds to endothelial cells via integrin alpha-V/beta-3 (ITGAV:ITGB3), activates FAK, MAPK and Akt signaling pathways and induces cell adhesion and cell migration. Secreted from podocytes, may modulate properties of glomerular endothelial cells involving integrin alpha-V/beta-3 and Akt signaling. May increase the motility of podocytes. May induce actin filament rearrangements in podocytes implicating integrin alpha-V/beta-3 and Rac1 activation. Binds to hematopoietic stem cells (HSC) and is involved in the regulation of HSC activity probably implicating down-regulation of IKZF1/IKAROS. This is Angiopoietin-related protein 3 (ANGPTL3) from Homo sapiens (Human).